Here is a 134-residue protein sequence, read N- to C-terminus: Protein Turandot E (134 aa).

The signal sequence occupies residues 1–38 (MSNTRTVHSSTSISKMNSALQISCLLVVLGCLLGSGHC).

Belongs to the Turandot family.

The protein resides in the secreted. In terms of biological role, a humoral factor that may play a role in stress tolerance. The polypeptide is Protein Turandot E (Drosophila melanogaster (Fruit fly)).